The following is a 1441-amino-acid chain: ABC transporter G family member 51 (1441 aa).

The tract at residues 52–71 (VLPDPDGLGGGDGGGRGEGQ) is disordered. Positions 58–69 (GLGGGDGGGRGE) are enriched in gly residues. An ABC transporter 1 domain is found at 154-428 (LISSHLLRPD…FKSLGFSLPP (275 aa)). Residue 187–194 (GPPASGKS) participates in ATP binding. One can recognise an ABC transmembrane type-2 1 domain in the interval 505–718 (SLVRACFARE…AQRAVSVNEF (214 aa)). 6 helical membrane-spanning segments follow: residues 523–543 (FLYT…STLF), 558–578 (LYLA…FTEM), 615–635 (FIEA…APTV), 642–662 (MLLL…MGAI), 668–688 (IAST…GFVV), and 751–771 (FWIG…MFTL). An ABC transporter 2 domain is found at 838–1090 (MTFHNVNYYV…DMINYFQGIP (253 aa)). Residue 883–890 (GASGSGKT) coordinates ATP. The ABC transmembrane type-2 2 domain maps to 1163 to 1380 (TQFMVCLRKQ…TLRGVITSQL (218 aa)). Transmembrane regions (helical) follow at residues 1184–1204 (VVRL…FWNV), 1214–1234 (ILLL…NNAS), 1271–1291 (VEIP…YFMV), 1300–1320 (LVLY…YGMV), 1330–1350 (MASV…GFLI), 1355–1375 (IPGW…LRGV), and 1413–1433 (ATVA…AISI).

This sequence belongs to the ABC transporter superfamily. ABCG family. PDR (TC 3.A.1.205) subfamily.

It is found in the membrane. May be a general defense protein. This is ABC transporter G family member 51 from Oryza sativa subsp. japonica (Rice).